A 650-amino-acid chain; its full sequence is Acetyl-coenzyme A synthetase (650 aa).

CoA is bound by residues 191–194 (RGGR), Thr311, and Asn335. ATP-binding positions include 387–389 (GEP), 411–416 (DTWWQT), Asp501, and Arg516. Ser524 lines the CoA pocket. Arg527 provides a ligand contact to ATP. Val538, His540, and Ile543 together coordinate Mg(2+). Arg585 contributes to the CoA binding site. An N6-acetyllysine modification is found at Lys610.

It belongs to the ATP-dependent AMP-binding enzyme family. Mg(2+) serves as cofactor. Post-translationally, acetylated. Deacetylation by the SIR2-homolog deacetylase activates the enzyme.

It catalyses the reaction acetate + ATP + CoA = acetyl-CoA + AMP + diphosphate. In terms of biological role, catalyzes the conversion of acetate into acetyl-CoA (AcCoA), an essential intermediate at the junction of anabolic and catabolic pathways. AcsA undergoes a two-step reaction. In the first half reaction, AcsA combines acetate with ATP to form acetyl-adenylate (AcAMP) intermediate. In the second half reaction, it can then transfer the acetyl group from AcAMP to the sulfhydryl group of CoA, forming the product AcCoA. This chain is Acetyl-coenzyme A synthetase, found in Vibrio vulnificus (strain YJ016).